The sequence spans 431 residues: CCA tRNA nucleotidyltransferase 1, mitochondrial (431 aa).

The transit peptide at 1–31 directs the protein to the mitochondrion; that stretch reads MWAKLFLRPSFVNRVHLTWSCRALLTMQLKT. Residues Gly61 and Arg64 each contribute to the ATP site. CTP-binding residues include Gly61 and Arg64. Asp74 and Asp76 together coordinate Mg(2+). ATP contacts are provided by Arg148, Asp191, Arg194, Arg197, and Arg200. 5 residues coordinate CTP: Arg148, Asp191, Arg194, Arg197, and Arg200.

It belongs to the tRNA nucleotidyltransferase/poly(A) polymerase family. As to quaternary structure, monomer, and homodimer. It depends on Mg(2+) as a cofactor. In terms of tissue distribution, expressed ubiquitously during early embryogenesis.

It is found in the mitochondrion. It localises to the cytoplasm. The protein localises to the nucleus. The catalysed reaction is a tRNA precursor + 2 CTP + ATP = a tRNA with a 3' CCA end + 3 diphosphate. It catalyses the reaction a tRNA with a 3' CCA end + 2 CTP + ATP = a tRNA with a 3' CCACCA end + 3 diphosphate. Functionally, nucleotidyltransferase that catalyzes the addition and repair of the essential 3'-terminal CCA sequence in tRNAs, which is necessary for the attachment of amino acids to the 3' terminus of tRNA molecules, using CTP and ATP as substrates. tRNA 3'-terminal CCA addition is required both for tRNA processing and repair. Promotes tRNA repair and recycling downstream of the ribosome-associated quality control (RQC) pathway by mediating addition of the tRNA 3'-terminal CCA following cleavage by ankzf1 and repair by elac1. Also involved in tRNA surveillance by mediating tandem CCA addition to generate a CCACCA at the 3' terminus of unstable tRNAs and tRNA-like transcripts. While stable tRNAs receive only 3'-terminal CCA, unstable tRNAs beginning with GG are marked with CCACCA and rapidly degraded. The structural flexibility of RNA controls the choice between CCA versus CCACCA addition: following the first CCA addition cycle, nucleotide-binding to the active site triggers a clockwise screw motion, producing torque on the RNA. This ejects stable RNAs, whereas unstable RNAs are refolded while bound to the enzyme and subjected to a second CCA catalytic cycle. The sequence is that of CCA tRNA nucleotidyltransferase 1, mitochondrial from Danio rerio (Zebrafish).